Reading from the N-terminus, the 293-residue chain is Lysosomal amino acid transporter 1 homolog (293 aa).

The Lumenal segment spans residues Met-1–Ala-37. N-linked (GlcNAc...) asparagine glycosylation occurs at Asn-10. One can recognise a PQ-loop 1 domain in the interval Trp-34 to Tyr-100. Residues Ser-38–Ile-58 form a helical membrane-spanning segment. Residues Lys-59 to Ser-71 are Cytoplasmic-facing. The helical transmembrane segment at Leu-72–Ala-92 threads the bilayer. Over Asp-93–Pro-96 the chain is Lumenal. A helical transmembrane segment spans residues Leu-97–Phe-117. Residues His-118–Ser-126 lie on the Cytoplasmic side of the membrane. A helical membrane pass occupies residues Leu-127–Pro-147. Over Leu-148–Val-182 the chain is Lumenal. Residues Val-183 to Ile-203 form a helical membrane-spanning segment. The 53-residue stretch at Ser-191–Gln-243 folds into the PQ-loop 2 domain. Residues Arg-204–Gly-214 are Cytoplasmic-facing. The helical transmembrane segment at Ile-215–Leu-235 threads the bilayer. The Lumenal portion of the chain corresponds to Leu-236–Pro-254. The helical transmembrane segment at Trp-255 to Val-275 threads the bilayer. At Tyr-276–Ser-293 the chain is on the cytoplasmic side. The Di-leucine motif signature appears at Leu-290–Leu-291.

The protein belongs to the laat-1 family.

It localises to the lysosome membrane. Amino acid transporter that specifically mediates the pH-dependent export of the cationic amino acids arginine, histidine and lysine from lysosomes. This is Lysosomal amino acid transporter 1 homolog (Slc66a1) from Rattus norvegicus (Rat).